Reading from the N-terminus, the 226-residue chain is RPA-interacting protein A (226 aa).

Residues 1 to 45 (MEAERRHRALYKGTTPPWKETYRKRCVERLKRNRSKLLDKFRQVG) form an interaction with importin beta region. Positions 49–171 (HGGVGGSFLV…QCGVYINTQS (123 aa)) are interaction with RPA1. Residues 144 to 219 (CPVCNRNYLT…ASLFMSCQEC (76 aa)) form an RIP-type zinc finger.

In terms of assembly, interacts directly with the rpa1 subunit of RPA complex. Interacts with importin beta, but not with importin alpha. Forms a complex with the RPA complex and importin beta, which is dissociated by Ran-GTP.

The protein resides in the nucleus. Mediates the import of RPA complex into the nucleus, via its interaction with importin beta. This chain is RPA-interacting protein A (rpain-a), found in Xenopus laevis (African clawed frog).